A 419-amino-acid polypeptide reads, in one-letter code: Tyrosine--tRNA ligase (419 aa).

Tyr34 is a binding site for L-tyrosine. The 'HIGH' region signature appears at 39 to 48 (PSGDSMHIGH). Positions 168 and 172 each coordinate L-tyrosine. Positions 230-234 (KFGKS) match the 'KMSKS' region motif. Lys233 lines the ATP pocket. The 67-residue stretch at 352-418 (ANLVDWLVTL…GKKKYFLVSY (67 aa)) folds into the S4 RNA-binding domain.

Belongs to the class-I aminoacyl-tRNA synthetase family. TyrS type 1 subfamily. Homodimer.

Its subcellular location is the cytoplasm. It carries out the reaction tRNA(Tyr) + L-tyrosine + ATP = L-tyrosyl-tRNA(Tyr) + AMP + diphosphate + H(+). Its function is as follows. Catalyzes the attachment of tyrosine to tRNA(Tyr) in a two-step reaction: tyrosine is first activated by ATP to form Tyr-AMP and then transferred to the acceptor end of tRNA(Tyr). In Listeria monocytogenes serotype 4b (strain CLIP80459), this protein is Tyrosine--tRNA ligase.